The primary structure comprises 127 residues: Modulator protein MzrA (127 aa).

Topologically, residues 1–10 (MVISPLALRR) are cytoplasmic. A helical transmembrane segment spans residues 11–31 (LSYGLIALVLLSALILVWTAL). At 32 to 127 (QRQESTLAIR…RLRDTSHRFG (96 aa)) the chain is on the periplasmic side.

This sequence belongs to the MzrA family. In terms of assembly, interacts with EnvZ.

It is found in the cell inner membrane. Its function is as follows. Modulates the activity of the EnvZ/OmpR two-component regulatory system, probably by directly modulating EnvZ enzymatic activity and increasing stability of phosphorylated OmpR. This Enterobacter sp. (strain 638) protein is Modulator protein MzrA.